We begin with the raw amino-acid sequence, 390 residues long: 1-deoxy-D-xylulose 5-phosphate reductoisomerase (390 aa).

Thr-10, Gly-11, Ser-12, Ile-13, Gly-36, Arg-37, Asn-38, and Asn-121 together coordinate NADPH. Lys-122 provides a ligand contact to 1-deoxy-D-xylulose 5-phosphate. Glu-123 contacts NADPH. A Mn(2+)-binding site is contributed by Asp-147. Residues Ser-148, Glu-149, Ser-173, and His-196 each contribute to the 1-deoxy-D-xylulose 5-phosphate site. Residue Glu-149 participates in Mn(2+) binding. An NADPH-binding site is contributed by Gly-202. Ser-209, Asn-214, Lys-215, and Glu-218 together coordinate 1-deoxy-D-xylulose 5-phosphate. Glu-218 provides a ligand contact to Mn(2+). The disordered stretch occupies residues Ala-367–Arg-390. The segment covering Glu-370–Val-380 has biased composition (basic and acidic residues).

Belongs to the DXR family. Mg(2+) is required as a cofactor. Requires Mn(2+) as cofactor.

It carries out the reaction 2-C-methyl-D-erythritol 4-phosphate + NADP(+) = 1-deoxy-D-xylulose 5-phosphate + NADPH + H(+). It participates in isoprenoid biosynthesis; isopentenyl diphosphate biosynthesis via DXP pathway; isopentenyl diphosphate from 1-deoxy-D-xylulose 5-phosphate: step 1/6. Functionally, catalyzes the NADPH-dependent rearrangement and reduction of 1-deoxy-D-xylulose-5-phosphate (DXP) to 2-C-methyl-D-erythritol 4-phosphate (MEP). This chain is 1-deoxy-D-xylulose 5-phosphate reductoisomerase, found in Anaeromyxobacter dehalogenans (strain 2CP-1 / ATCC BAA-258).